The sequence spans 486 residues: Surface lipoprotein assembly modifier (486 aa).

An N-terminal signal peptide occupies residues 1–29 (MKNGVKQISFLSLIGLSLIGLSLTNIAWA). Residues 30–197 (KVARPKNDTL…QYLLTLNQRN (168 aa)) form an N-terminal domain region. Residues 198–486 (QWIWQVGLNF…RIYLEIGKIF (289 aa)) are C-terminal probable beta barrel. The next 14 membrane-spanning stretches (beta stranded) occupy residues 199-209 (WIWQVGLNFLN), 237-248 (GRVFFISRKKWP), 253-262 (FFSKTMFNGN), 276-286 (TLRIGGGLGYQ), 290-300 (VEVSLFPFQEK), 320-330 (LGIRLENVDWL), 334-344 (WQISTALEYGE), 358-367 (YFISSTLFYL), 373-382 (FWFVGMDFHR), 395-404 (KTLRLGWGQD), 409-419 (ISSRLTFSYAN), 437-446 (YATTITLWHR), 453-463 (LTPKLSWDYQK), and 476-486 (NRIYLEIGKIF).

This sequence belongs to the Slam family.

The protein localises to the cell outer membrane. Functionally, required for correct export to the cell surface of some cell outer membrane lipoproteins (tested with TpbP) upon heterologous expression in E.coli and probably also in Haemophilus. In Haemophilus influenzae (strain 86-028NP), this protein is Surface lipoprotein assembly modifier.